A 247-amino-acid polypeptide reads, in one-letter code: ATP synthase subunit a, plastid (247 aa).

5 helical membrane passes run 33–53, 95–115, 134–154, 199–219, and 220–240; these read FLVHGQVLITSWVVIAILLGS, VPFIGTMFLFIFVSNWSGALL, INTTVALALLTSAAYFYAGIL, LVVVVLVSLVPSVVPIPVMLL, and GLFTSGIQALIFATLAAAYIG.

It belongs to the ATPase A chain family. F-type ATPases have 2 components, CF(1) - the catalytic core - and CF(0) - the membrane proton channel. CF(1) has five subunits: alpha(3), beta(3), gamma(1), delta(1), epsilon(1). CF(0) has four main subunits: a, b, b' and c.

It localises to the plastid membrane. In terms of biological role, key component of the proton channel; it plays a direct role in the translocation of protons across the membrane. In Cuscuta exaltata (Tall dodder), this protein is ATP synthase subunit a, plastid.